A 177-amino-acid chain; its full sequence is Large ribosomal subunit protein uL6 (177 aa).

The protein belongs to the universal ribosomal protein uL6 family. Part of the 50S ribosomal subunit.

Functionally, this protein binds to the 23S rRNA, and is important in its secondary structure. It is located near the subunit interface in the base of the L7/L12 stalk, and near the tRNA binding site of the peptidyltransferase center. The sequence is that of Large ribosomal subunit protein uL6 from Herminiimonas arsenicoxydans.